Consider the following 201-residue polypeptide: FMN reductase (NADH) RutF 1 (201 aa).

Over residues 167-195 the composition is skewed to low complexity; it reads PRAPRSGSAPAEPARAARAVGARPAEGPA. The segment at 167–201 is disordered; it reads PRAPRSGSAPAEPARAARAVGARPAEGPALALRSA.

It belongs to the non-flavoprotein flavin reductase family. RutF subfamily.

It carries out the reaction FMNH2 + NAD(+) = FMN + NADH + 2 H(+). In terms of biological role, catalyzes the reduction of FMN to FMNH2 which is used to reduce pyrimidine by RutA via the Rut pathway. In Methylorubrum extorquens (strain CM4 / NCIMB 13688) (Methylobacterium extorquens), this protein is FMN reductase (NADH) RutF 1.